The primary structure comprises 303 residues: Sulfate adenylyltransferase subunit 2 (303 aa).

Belongs to the PAPS reductase family. CysD subfamily. Heterodimer composed of CysD, the smaller subunit, and CysN.

It catalyses the reaction sulfate + ATP + H(+) = adenosine 5'-phosphosulfate + diphosphate. The protein operates within sulfur metabolism; hydrogen sulfide biosynthesis; sulfite from sulfate: step 1/3. With CysN forms the ATP sulfurylase (ATPS) that catalyzes the adenylation of sulfate producing adenosine 5'-phosphosulfate (APS) and diphosphate, the first enzymatic step in sulfur assimilation pathway. APS synthesis involves the formation of a high-energy phosphoric-sulfuric acid anhydride bond driven by GTP hydrolysis by CysN coupled to ATP hydrolysis by CysD. The polypeptide is Sulfate adenylyltransferase subunit 2 (Akkermansia muciniphila (strain ATCC BAA-835 / DSM 22959 / JCM 33894 / BCRC 81048 / CCUG 64013 / CIP 107961 / Muc)).